We begin with the raw amino-acid sequence, 182 residues long: Heat shock protein beta-2 (182 aa).

The 109-residue stretch at 55-163 (PAGEGSRAGA…DTEVNEVYIS (109 aa)) folds into the sHSP domain.

It belongs to the small heat shock protein (HSP20) family. In terms of assembly, interacts with DMPK; may enhance its kinase activity. As to expression, expressed preferentially in skeletal muscle and heart but not in the lens.

The protein localises to the cytoplasm. It localises to the nucleus. Its function is as follows. May regulate the kinase DMPK. The protein is Heat shock protein beta-2 (HSPB2) of Homo sapiens (Human).